We begin with the raw amino-acid sequence, 248 residues long: Granzyme-like protein 1 (248 aa).

Positions Met1–Ala18 are cleaved as a signal peptide. Positions Ala19–Glu20 are cleaved as a propeptide — activation peptide. The region spanning Ile21 to Lys246 is the Peptidase S1 domain. An intrachain disulfide couples Cys50 to Cys66. His65 acts as the Charge relay system in catalysis. An N-linked (GlcNAc...) asparagine glycan is attached at Asn72. Asp109 functions as the Charge relay system in the catalytic mechanism. Disulfide bonds link Cys143–Cys210 and Cys174–Cys189. Ser204 functions as the Charge relay system in the catalytic mechanism.

The protein belongs to the peptidase S1 family. Granzyme subfamily. Duodenum.

This enzyme is necessary for target cell lysis in cell-mediated immune responses. The protein is Granzyme-like protein 1 of Rattus norvegicus (Rat).